We begin with the raw amino-acid sequence, 313 residues long: Porphobilinogen deaminase (313 aa).

Cys242 bears the S-(dipyrrolylmethanemethyl)cysteine mark.

It belongs to the HMBS family. As to quaternary structure, monomer. Dipyrromethane serves as cofactor.

It catalyses the reaction 4 porphobilinogen + H2O = hydroxymethylbilane + 4 NH4(+). It participates in porphyrin-containing compound metabolism; protoporphyrin-IX biosynthesis; coproporphyrinogen-III from 5-aminolevulinate: step 2/4. Tetrapolymerization of the monopyrrole PBG into the hydroxymethylbilane pre-uroporphyrinogen in several discrete steps. The polypeptide is Porphobilinogen deaminase (Photorhabdus laumondii subsp. laumondii (strain DSM 15139 / CIP 105565 / TT01) (Photorhabdus luminescens subsp. laumondii)).